We begin with the raw amino-acid sequence, 151 residues long: Arginine repressor (151 aa).

The protein belongs to the ArgR family.

The protein resides in the cytoplasm. Its pathway is amino-acid biosynthesis; L-arginine biosynthesis [regulation]. In terms of biological role, regulates arginine biosynthesis genes. This Lachnospira eligens (strain ATCC 27750 / DSM 3376 / VPI C15-48 / C15-B4) (Eubacterium eligens) protein is Arginine repressor.